The chain runs to 360 residues: Phenylalanine--tRNA ligase alpha subunit (360 aa).

Residue E260 participates in Mg(2+) binding.

It belongs to the class-II aminoacyl-tRNA synthetase family. Phe-tRNA synthetase alpha subunit type 1 subfamily. In terms of assembly, tetramer of two alpha and two beta subunits. It depends on Mg(2+) as a cofactor.

It is found in the cytoplasm. The enzyme catalyses tRNA(Phe) + L-phenylalanine + ATP = L-phenylalanyl-tRNA(Phe) + AMP + diphosphate + H(+). This Rhodopseudomonas palustris (strain ATCC BAA-98 / CGA009) protein is Phenylalanine--tRNA ligase alpha subunit.